The primary structure comprises 223 residues: GTP cyclohydrolase 1 (223 aa).

Residues cysteine 111, histidine 114, and cysteine 182 each contribute to the Zn(2+) site.

The protein belongs to the GTP cyclohydrolase I family. In terms of assembly, homomer.

The catalysed reaction is GTP + H2O = 7,8-dihydroneopterin 3'-triphosphate + formate + H(+). It functions in the pathway cofactor biosynthesis; 7,8-dihydroneopterin triphosphate biosynthesis; 7,8-dihydroneopterin triphosphate from GTP: step 1/1. The sequence is that of GTP cyclohydrolase 1 from Flavobacterium johnsoniae (strain ATCC 17061 / DSM 2064 / JCM 8514 / BCRC 14874 / CCUG 350202 / NBRC 14942 / NCIMB 11054 / UW101) (Cytophaga johnsonae).